A 905-amino-acid polypeptide reads, in one-letter code: Cadherin-2B (905 aa).

The N-terminal stretch at 1–28 (MCRKQPFLLPTLLGILAALMLQQGPVEA) is a signal peptide. Residues 29 to 160 (FGGSRLCKTG…NSNGLQRQKR (132 aa)) constitute a propeptide that is removed on maturation. 5 consecutive Cadherin domains span residues 161–268 (DWVI…RPEF), 269–383 (LHQI…PPEF), 384–498 (TAMT…NPYF), 499–604 (TPNP…DNAP), and 605–713 (YVYP…TTAP). The Extracellular segment spans residues 161–723 (DWVIPPINVP…IIGTGLGTGA (563 aa)). Glutamate 171 contacts Ca(2+). Residue asparagine 191 is glycosylated (N-linked (GlcNAc...) asparagine). Positions 227, 229, 260, 261, 262, 263, and 264 each coordinate Ca(2+). N-linked (GlcNAc...) asparagine glycosylation is present at asparagine 274. Residues aspartate 294, aspartate 296, and asparagine 302 each coordinate Ca(2+). Asparagine 326 carries N-linked (GlcNAc...) asparagine glycosylation. Residue aspartate 354 participates in Ca(2+) binding. N-linked (GlcNAc...) asparagine glycosylation is found at asparagine 403, asparagine 573, asparagine 623, asparagine 651, and asparagine 692. Residues 724 to 745 (IIAILLCIIILLTLVLMFVVWM) traverse the membrane as a helical segment. Residues 746 to 905 (KRRDKERQAK…LADMYGGSDD (160 aa)) lie on the Cytoplasmic side of the membrane. Disordered stretches follow at residues 774 to 800 (EEGGGEEDQDYDLSQLQQPDTMEPDTI) and 862 to 883 (SGSTAGSLSSLNSSSSGGEQDY). Over residues 775–784 (EGGGEEDQDY) the composition is skewed to acidic residues. Over residues 862–879 (SGSTAGSLSSLNSSSSGG) the composition is skewed to low complexity.

Homodimer (via extracellular region). Can also form heterodimers with other cadherins (via extracellular region). Dimerization occurs in trans, i.e. with a cadherin chain from another cell.

Its subcellular location is the cell membrane. The protein resides in the sarcolemma. It localises to the cell junction. It is found in the cell surface. The protein localises to the desmosome. Its subcellular location is the adherens junction. Functionally, calcium-dependent cell adhesion protein; preferentially mediates homotypic cell-cell adhesion. Cadherins may thus contribute to the sorting of heterogeneous cell types, and thereby play an important role during embryonic development. Required for proper neurite branching. Required for pre- and postsynaptic organization. This is Cadherin-2B (cdh2-b) from Xenopus laevis (African clawed frog).